Consider the following 423-residue polypeptide: Nucleoporin NUP42 (423 aa).

The segment at 1–25 (MAICQFFLQGRCRFGDRCWNEHPGA) adopts a C3H1-type zinc-finger fold. The stretch at 14–15 (FG) is one FG 1 repeat. Positions 24–85 (GARGAGGGRQ…EKPYFSSFDS (62 aa)) are disordered. Positions 40 to 69 (SGNNRRGWNTTSQRYSNVIQPSSFSKSTPW) are enriched in polar residues. An interaction with HIV-1 Vpr region spans residues 94-170 (GFGLSENPFA…EYHNFLTSNN (77 aa)). One copy of the FG 2 repeat lies at 95–96 (FG). Ser106 bears the Phosphoserine mark. 10 FG repeats span residues 218 to 219 (FG), 220 to 221 (FG), 265 to 266 (FG), 271 to 272 (FG), 288 to 289 (FG), 290 to 291 (FG), 311 to 312 (FG), 336 to 337 (FG), 345 to 346 (FG), and 364 to 365 (FG). Residues 365–423 (GNSSISTSLSASSSIIATDNVLFTPRDKLTVEELEQFQSKKFTLGKIPLKPPPLELLNV) are interaction with GLE1.

In terms of assembly, probable component of the nuclear pore complex (NPC). Interacts with nuclear export protein NXF1. Interacts with GLE1. Able to form a heterotrimer with NUP155 and GLE1 in vitro. Interacts with XPO1. (Microbial infection) Interacts with the HIV-1 virus proteins Rev and Vpr. The interaction with HIV-1 Rev, a protein that mediates nuclear export of unspliced viral RNAs, suggests that its function may be bypassed by the HIV-1 virus. O-glycosylated. In terms of tissue distribution, ubiquitously expressed.

Its subcellular location is the nucleus. The protein localises to the nuclear pore complex. The protein resides in the nucleus membrane. In terms of biological role, required for the export of mRNAs containing poly(A) tails from the nucleus into the cytoplasm. Functionally, (Microbial infection) In case of infection by HIV-1, it may participate in the docking of viral Vpr at the nuclear envelope. The protein is Nucleoporin NUP42 of Homo sapiens (Human).